The primary structure comprises 645 residues: COP9 signalosome complex subunit 10 (645 aa).

A compositionally biased stretch (acidic residues) spans 1–45 (MSDEDNNYDDFMLSDDEGMESIEMEEETDDEDKQNIEINEDNSQD). The tract at residues 1–63 (MSDEDNNYDD…HKQHEQGTFE (63 aa)) is disordered. Over residues 46–63 (DQDRGAARHKQHEQGTFE) the composition is skewed to basic and acidic residues. The region spanning 348–543 (DLSFALMRYY…DLVYFGDENK (196 aa)) is the PCI domain.

As to quaternary structure, component of a COP9 signalosome-like (CSN) complex, composed of at least RRI1/CSN5, CSN9, RRI2/CSN10, PCI8/CSN11, CSN12 and CSI1. In the complex, it probably interacts directly with CSN12.

The protein resides in the cytoplasm. It is found in the nucleus. Component of the COP9 signalosome (CSN) complex that acts as an regulator of the ubiquitin (Ubl) conjugation pathway by mediating the deneddylation of the cullin subunit of SCF-type E3 ubiquitin-protein ligase complexes. The CSN complex is involved in the regulation of the mating pheromone response. This chain is COP9 signalosome complex subunit 10 (RRI2), found in Saccharomyces cerevisiae (strain ATCC 204508 / S288c) (Baker's yeast).